A 126-amino-acid polypeptide reads, in one-letter code: MNIIEQLEQEEIARLGKTVPDFAPGDTVVVQVKVKEGNRERLQAYEGVVIAKRNRGLNSAFTVRKISAGEGVERTFQTYSPLVASVEVKRRGDVRRAKLYYLRERSGKSARIKEKLPARKASVAAE.

This sequence belongs to the bacterial ribosomal protein bL19 family.

In terms of biological role, this protein is located at the 30S-50S ribosomal subunit interface and may play a role in the structure and function of the aminoacyl-tRNA binding site. This is Large ribosomal subunit protein bL19 from Thiobacillus denitrificans (strain ATCC 25259 / T1).